A 941-amino-acid polypeptide reads, in one-letter code: Isoleucine--tRNA ligase (941 aa).

The 'HIGH' region signature appears at 69–79 (PYANGDIHIGH). L-isoleucyl-5'-AMP is bound at residue Glu-589. The short motif at 630 to 634 (KMSKS) is the 'KMSKS' region element. Residue Lys-633 participates in ATP binding. Residues Cys-915, Cys-918, Cys-932, and Cys-935 each contribute to the Zn(2+) site.

Belongs to the class-I aminoacyl-tRNA synthetase family. IleS type 1 subfamily. As to quaternary structure, monomer. The cofactor is Zn(2+).

The protein resides in the cytoplasm. The enzyme catalyses tRNA(Ile) + L-isoleucine + ATP = L-isoleucyl-tRNA(Ile) + AMP + diphosphate. Its function is as follows. Catalyzes the attachment of isoleucine to tRNA(Ile). As IleRS can inadvertently accommodate and process structurally similar amino acids such as valine, to avoid such errors it has two additional distinct tRNA(Ile)-dependent editing activities. One activity is designated as 'pretransfer' editing and involves the hydrolysis of activated Val-AMP. The other activity is designated 'posttransfer' editing and involves deacylation of mischarged Val-tRNA(Ile). The chain is Isoleucine--tRNA ligase from Zymomonas mobilis subsp. mobilis (strain ATCC 31821 / ZM4 / CP4).